A 231-amino-acid chain; its full sequence is Biosynthetic peptidoglycan transglycosylase (231 aa).

Residues 7–27 traverse the membrane as a helical segment; that stretch reads LLFWLIVVPVLLVLLLQLYFF.

The protein belongs to the glycosyltransferase 51 family.

It is found in the cell inner membrane. It catalyses the reaction [GlcNAc-(1-&gt;4)-Mur2Ac(oyl-L-Ala-gamma-D-Glu-L-Lys-D-Ala-D-Ala)](n)-di-trans,octa-cis-undecaprenyl diphosphate + beta-D-GlcNAc-(1-&gt;4)-Mur2Ac(oyl-L-Ala-gamma-D-Glu-L-Lys-D-Ala-D-Ala)-di-trans,octa-cis-undecaprenyl diphosphate = [GlcNAc-(1-&gt;4)-Mur2Ac(oyl-L-Ala-gamma-D-Glu-L-Lys-D-Ala-D-Ala)](n+1)-di-trans,octa-cis-undecaprenyl diphosphate + di-trans,octa-cis-undecaprenyl diphosphate + H(+). It functions in the pathway cell wall biogenesis; peptidoglycan biosynthesis. Functionally, peptidoglycan polymerase that catalyzes glycan chain elongation from lipid-linked precursors. This is Biosynthetic peptidoglycan transglycosylase from Janthinobacterium sp. (strain Marseille) (Minibacterium massiliensis).